Reading from the N-terminus, the 473-residue chain is Photosystem II CP43 reaction center protein (473 aa).

A propeptide spanning residues 1–14 (MKTLYSLRRFYPVE) is cleaved from the precursor. Thr15 bears the N-acetylthreonine mark. Thr15 is subject to Phosphothreonine. The next 5 membrane-spanning stretches (helical) occupy residues 69–93 (LFEV…PHLA), 134–155 (LLGP…KDRN), 178–200 (KALY…RKIT), 255–275 (KPFA…LSYS), and 291–312 (WFNN…ASQA). [CaMn4O5] cluster is bound at residue Glu367. A helical transmembrane segment spans residues 447–471 (RARAAAAGFEKGIDRDFEPVLSMTP).

Belongs to the PsbB/PsbC family. PsbC subfamily. PSII is composed of 1 copy each of membrane proteins PsbA, PsbB, PsbC, PsbD, PsbE, PsbF, PsbH, PsbI, PsbJ, PsbK, PsbL, PsbM, PsbT, PsbX, PsbY, PsbZ, Psb30/Ycf12, at least 3 peripheral proteins of the oxygen-evolving complex and a large number of cofactors. It forms dimeric complexes. The cofactor is Binds multiple chlorophylls and provides some of the ligands for the Ca-4Mn-5O cluster of the oxygen-evolving complex. It may also provide a ligand for a Cl- that is required for oxygen evolution. PSII binds additional chlorophylls, carotenoids and specific lipids..

The protein resides in the plastid. The protein localises to the chloroplast thylakoid membrane. One of the components of the core complex of photosystem II (PSII). It binds chlorophyll and helps catalyze the primary light-induced photochemical processes of PSII. PSII is a light-driven water:plastoquinone oxidoreductase, using light energy to abstract electrons from H(2)O, generating O(2) and a proton gradient subsequently used for ATP formation. The polypeptide is Photosystem II CP43 reaction center protein (Eucalyptus globulus subsp. globulus (Tasmanian blue gum)).